A 341-amino-acid chain; its full sequence is Myb-related transcription factor, partner of profilin (341 aa).

Residues 8–80 (VTRLRKPRFS…EVQKRWNDFK (73 aa)) form the Myb-like domain. Disordered regions lie at residues 84 to 103 (KEKL…EEAM), 180 to 210 (LPHL…PSGV), and 309 to 341 (AEPP…WKNL). Pro residues predominate over residues 184–200 (TPSPDPSECPSPPPPGS). Positions 321-341 (NKRKRFGYLSQRKRRGRWKNL) are enriched in basic residues.

The protein localises to the nucleus. Functionally, transcriptional repressor; DNA-binding protein that specifically recognizes the core sequence 5'-YAAC[GT]G-3'. This chain is Myb-related transcription factor, partner of profilin (mypop), found in Xenopus laevis (African clawed frog).